The chain runs to 429 residues: Choline kinase A2 (429 aa).

Residues 82 to 88 (KGGMSNM), Arg-111, 152 to 158 (EYIPSRP), and Gln-257 each bind ATP. 84 to 86 (GMS) lines the substrate pocket. Residue Glu-258 participates in Ca(2+) binding. Asp-301 serves as a coordination point for ATP. Residues Glu-320 and Ile-323 each coordinate Ca(2+).

The protein belongs to the choline/ethanolamine kinase family. In terms of assembly, homodimer. A small proportion exists as higher oligomers. It depends on Mg(2+) as a cofactor.

The catalysed reaction is choline + ATP = phosphocholine + ADP + H(+). It carries out the reaction ethanolamine + ATP = phosphoethanolamine + ADP + H(+). It functions in the pathway phospholipid metabolism; phosphatidylcholine biosynthesis; phosphocholine from choline: step 1/1. Its pathway is phospholipid metabolism; phosphatidylethanolamine biosynthesis; phosphatidylethanolamine from ethanolamine: step 1/3. Inhibited by Ca(2+). Mild inhibition by high levels of Mg(2+)(&gt;10 mM). Its function is as follows. Catalyzes the first step in phosphatidylcholine biosynthesis. May contribute to phosphatidylethanolamine biosynthesis. Phosphorylates choline and ethanolamine but the activity is much higher with choline. The chain is Choline kinase A2 from Caenorhabditis elegans.